Here is a 57-residue protein sequence, read N- to C-terminus: Large ribosomal subunit protein bL32 (57 aa).

It belongs to the bacterial ribosomal protein bL32 family.

The chain is Large ribosomal subunit protein bL32 (rpmF) from Halalkalibacterium halodurans (strain ATCC BAA-125 / DSM 18197 / FERM 7344 / JCM 9153 / C-125) (Bacillus halodurans).